The sequence spans 331 residues: tRNA N6-adenosine threonylcarbamoyltransferase (331 aa).

Fe cation is bound by residues His-109, His-113, and Tyr-130. Substrate is bound by residues 130-134 (YLSGG), Asp-162, Asp-183, and Ser-262. Residue Asp-290 participates in Fe cation binding.

The protein belongs to the KAE1 / TsaD family. The cofactor is Fe(2+).

It is found in the cytoplasm. It catalyses the reaction L-threonylcarbamoyladenylate + adenosine(37) in tRNA = N(6)-L-threonylcarbamoyladenosine(37) in tRNA + AMP + H(+). In terms of biological role, required for the formation of a threonylcarbamoyl group on adenosine at position 37 (t(6)A37) in tRNAs that read codons beginning with adenine. Is probably involved in the transfer of the threonylcarbamoyl moiety of threonylcarbamoyl-AMP (TC-AMP) to the N6 group of A37. The sequence is that of tRNA N6-adenosine threonylcarbamoyltransferase from Metallosphaera sedula (strain ATCC 51363 / DSM 5348 / JCM 9185 / NBRC 15509 / TH2).